The primary structure comprises 329 residues: PDZ and LIM domain protein 1 (329 aa).

Thr2 carries the post-translational modification N-acetylthreonine. Residues 3–85 (TQQIDLQGPG…NLTLTVARSE (83 aa)) form the PDZ domain. 2 positions are modified to phosphoserine: Ser90 and Ser130. Tyr144 is subject to Phosphotyrosine. In terms of domain architecture, LIM zinc-binding spans 258-317 (PMCDKCGTGIVGVFVKLRDRHRHPECYVCTDCGTNLKQKGHFFVEDQIYCEKHARERVTP). The Zn(2+) site is built by Cys260, Cys263, His280, Cys283, Cys286, Cys289, Cys307, and His310. Thr316 carries the post-translational modification Phosphothreonine. The residue at position 321 (Tyr321) is a Phosphotyrosine.

Interacts with ACTN1, ACTN2 and ACTN4. Interacts with PDLIM4. In terms of tissue distribution, strongly expressed in the heart and skeletal muscle, moderately expressed in the spleen, small intestine, colon, placenta, and lung. A lower level expression is seen in liver, thymus, kidney, prostate and pancreas and is not found in the brain, testis, ovary, and peripheral blood leukocytes.

The protein resides in the cytoplasm. The protein localises to the cytoskeleton. It is found in the myofibril. It localises to the sarcomere. Its subcellular location is the z line. Cytoskeletal protein that may act as an adapter that brings other proteins (like kinases) to the cytoskeleton. Involved in assembly, disassembly and directioning of stress fibers in fibroblasts. Required for the localization of ACTN1 and PALLD to stress fibers. Required for cell migration and in maintaining cell polarity of fibroblasts. The protein is PDZ and LIM domain protein 1 (PDLIM1) of Homo sapiens (Human).